The following is a 226-amino-acid chain: Probable C4-dicarboxylate response regulator DctR (226 aa).

One can recognise a Response regulatory domain in the interval 7 to 123 (KVLLIEDDPM…RMRQALEKYK (117 aa)). Asp58 is modified (4-aspartylphosphate). The H-T-H motif DNA-binding region spans 179–198 (AEEVAKALGIARVTARRYLD).

Phosphorylated by DctS.

It is found in the cytoplasm. Its function is as follows. Member of the two-component regulatory system DctS/DctR. Essential for expression of dctP. The protein is Probable C4-dicarboxylate response regulator DctR (dctR) of Bacillus subtilis (strain 168).